The primary structure comprises 141 residues: Hemoglobin subunit alpha (141 aa).

The Globin domain maps to 1–141 (VLSPDDKKHV…VSTVLTSKYR (141 aa)). Serine 3 carries the phosphoserine modification. Residues lysine 7 and lysine 11 each carry the N6-succinyllysine modification. Lysine 16 is subject to N6-acetyllysine; alternate. Lysine 16 carries the N6-succinyllysine; alternate modification. A Phosphotyrosine modification is found at tyrosine 24. The residue at position 35 (serine 35) is a Phosphoserine. Lysine 40 carries the N6-succinyllysine modification. Serine 49 carries the phosphoserine modification. Residue histidine 58 coordinates O2. Position 87 (histidine 87) interacts with heme b. The residue at position 102 (serine 102) is a Phosphoserine. The residue at position 108 (threonine 108) is a Phosphothreonine. Serine 124 and serine 131 each carry phosphoserine. 2 positions are modified to phosphothreonine: threonine 134 and threonine 137. Phosphoserine is present on serine 138.

The protein belongs to the globin family. In terms of assembly, heterotetramer of two alpha chains and two beta chains. In terms of tissue distribution, red blood cells.

Involved in oxygen transport from the lung to the various peripheral tissues. In terms of biological role, hemopressin acts as an antagonist peptide of the cannabinoid receptor CNR1. Hemopressin-binding efficiently blocks cannabinoid receptor CNR1 and subsequent signaling. This chain is Hemoglobin subunit alpha (HBA), found in Cercocebus atys (Sooty mangabey).